A 367-amino-acid polypeptide reads, in one-letter code: Apolipoprotein A-V (367 aa).

The N-terminal stretch at 1 to 20 is a signal peptide; the sequence is MVAVLTWALALLSAFATAQT. Position 56 is a phosphoserine (S56).

The protein belongs to the apolipoprotein A1/A4/E family. Interacts with GPIHBP1. Interacts with SORL1; this interaction leads to APOA5 internalization and sorting either to lysosomes and degradation, or to the trans-Golgi network. Post-translationally, phosphorylated by FAM20C in the extracellular medium.

It localises to the secreted. It is found in the early endosome. The protein resides in the late endosome. Its subcellular location is the golgi apparatus. The protein localises to the trans-Golgi network. Its function is as follows. Minor apolipoprotein mainly associated with HDL and to a lesser extent with VLDL. May also be associated with chylomicrons. Important determinant of plasma triglyceride (TG) levels by both being a potent stimulator of apo-CII lipoprotein lipase (LPL) TG hydrolysis and an inhibitor of the hepatic VLDL-TG production rate (without affecting the VLDL-apoB production rate). Activates poorly lecithin:cholesterol acyltransferase (LCAT) and does not enhance efflux of cholesterol from macrophages. Binds heparin. This chain is Apolipoprotein A-V (APOA5), found in Phoca vitulina (Harbor seal).